The chain runs to 64 residues: Drosocin antimicrobial peptides (64 aa).

An N-terminal signal peptide occupies residues M1–A19. The propeptide occupies T20–P21. Residue S28 is glycosylated (O-linked (GalNAc...) serine). O-linked (GalNAc...) threonine glycosylation is present at T32. The segment at T32–V40 is critical for inhibition of translation, possibly due to its role in mediating interactions with bacterial 23S rRNA and peptide chain release factors.

The protein belongs to the drosocin family. As to quaternary structure, associates with the bacterial 50S ribosomal complex, occupying the nascent peptide exit tunnel. Interacts with bacterial 23S rRNA; this interaction is direct. Interacts with bacterial rplV/50S ribosomal protein L22; this interaction is direct. Interacts with bacterial prfA/peptide chain release factor RF1; while associated with the bacterial 50S ribosomal complex, this interaction is direct and traps RF1 on the ribosome, inhibiting further translation. In terms of processing, proteolytically cleaved at a pair of basic residues corresponding to the RXK/RR optimal cleavage site for furin proteases to produce two distinct antibacterial peptides. Post-translationally, O-glycosylated. O-glycosylation may be required for efficient uptake by target bacterial cells. Monosaccharide modification of Thr-32 provides better antibacterial activity than disaccharide modification or no modification. O-glycosylation of Thr-32 is not essential for antimicrobial activity but enhances this activity by mediating interactions with the 23S rRNA and increasing the efficiency of translation inhibition.

The protein localises to the secreted. Its function is as follows. Antibacterial peptide with strong anti-Gram-negative bacteria activity. Significantly contributes to antibacterial activity against Enterobacter cloacae but not Providencia burhodogranariea. Inhibitor of bacterial translation machinery that targets translation termination in a prfA- or prfB-dependent manner. Binds within the nascent peptide exit tunnel of the bacterial large ribosomal subunit, potentially interfering with nascent chain translocation that occurs post-peptide bond formation. Binds prfA/RF1 (and potentially prfB/RF2), trapping it on the ribosome after release of the nascent polypeptide chain and preventing further translation. The resulting depletion of peptide chain release factors further disrupts bacterial translation by preventing ribosomal peptide chain release and inducing stop codon readthrough. Entry into target Escherichia coli cells requires the bacterial peptide antibiotic transporter sbmA. In terms of biological role, peptide with significant antibacterial activity against Providencia burhodogranariea but not Enterobacter cloacae. In Drosophila simulans (Fruit fly), this protein is Drosocin antimicrobial peptides (Dro).